The primary structure comprises 249 residues: Triosephosphate isomerase (249 aa).

Positions 12 and 14 each coordinate substrate. An N6-acetyllysine modification is found at K14. Position 68 is a 3'-nitrotyrosine (Y68). S80 bears the Phosphoserine mark. The Electrophile role is filled by H96. A Phosphoserine modification is found at S106. Residue K142 forms a Glycyl lysine isopeptide (Lys-Gly) (interchain with G-Cter in SUMO1) linkage. The residue at position 149 (K149) is an N6-succinyllysine. Residue K156 is modified to N6-acetyllysine; alternate. N6-succinyllysine; alternate is present on K156. S159 carries the post-translational modification Phosphoserine. E166 (proton acceptor) is an active-site residue. T173 carries the post-translational modification Phosphothreonine. Position 194 is an N6-acetyllysine; alternate (K194). N6-succinyllysine; alternate is present on K194. Residue K194 is modified to N6-methyllysine; alternate. S198 is subject to Phosphoserine. Residue Y209 is modified to 3'-nitrotyrosine. A Phosphoserine modification is found at S212. T214 bears the Phosphothreonine mark. S223 bears the Phosphoserine mark. K238 is subject to N6-acetyllysine.

It belongs to the triosephosphate isomerase family. As to quaternary structure, homodimer.

The protein localises to the cytoplasm. The catalysed reaction is dihydroxyacetone phosphate = methylglyoxal + phosphate. It carries out the reaction D-glyceraldehyde 3-phosphate = dihydroxyacetone phosphate. The protein operates within carbohydrate degradation; glycolysis; D-glyceraldehyde 3-phosphate from glycerone phosphate: step 1/1. It participates in carbohydrate biosynthesis; gluconeogenesis. Functionally, triosephosphate isomerase is an extremely efficient metabolic enzyme that catalyzes the interconversion between dihydroxyacetone phosphate (DHAP) and D-glyceraldehyde-3-phosphate (G3P) in glycolysis and gluconeogenesis. In terms of biological role, it is also responsible for the non-negligible production of methylglyoxal a reactive cytotoxic side-product that modifies and can alter proteins, DNA and lipids. The sequence is that of Triosephosphate isomerase (TPI1) from Gorilla gorilla gorilla (Western lowland gorilla).